We begin with the raw amino-acid sequence, 739 residues long: Polyribonucleotide nucleotidyltransferase (739 aa).

Residues Asp487 and Asp493 each coordinate Mg(2+). The KH domain maps to 554-613 (PRIETMQIPTDKIRDVIGTGGKVIREIVEKTGAKINIEDTGVVKIASADGKAIKAAYNWI). In terms of domain architecture, S1 motif spans 623 to 691 (GVIYDGTIVK…DRGKIRLSMK (69 aa)). The segment at 694–739 (DQQTGEDITDKIKAQRDAERAERGDEPREPREGGRHRGERRREAGE) is disordered. Over residues 701–739 (ITDKIKAQRDAERAERGDEPREPREGGRHRGERRREAGE) the composition is skewed to basic and acidic residues.

The protein belongs to the polyribonucleotide nucleotidyltransferase family. Mg(2+) is required as a cofactor.

The protein resides in the cytoplasm. The enzyme catalyses RNA(n+1) + phosphate = RNA(n) + a ribonucleoside 5'-diphosphate. In terms of biological role, involved in mRNA degradation. Catalyzes the phosphorolysis of single-stranded polyribonucleotides processively in the 3'- to 5'-direction. This is Polyribonucleotide nucleotidyltransferase from Methylobacterium radiotolerans (strain ATCC 27329 / DSM 1819 / JCM 2831 / NBRC 15690 / NCIMB 10815 / 0-1).